Consider the following 410-residue polypeptide: Elongation factor Tu, chloroplastic (410 aa).

The tr-type G domain maps to K10–K215. Residues G19–T26 are G1. G19–T26 contributes to the GTP binding site. Mg(2+) is bound at residue T26. The G2 stretch occupies residues G61–N65. A G3 region spans residues D82–G85. GTP is bound by residues D82–H86 and N137–D140. Residues N137 to D140 are G4. Residues S175–L177 are G5.

Belongs to the TRAFAC class translation factor GTPase superfamily. Classic translation factor GTPase family. EF-Tu/EF-1A subfamily.

It localises to the plastid. The protein resides in the chloroplast. It carries out the reaction GTP + H2O = GDP + phosphate + H(+). In terms of biological role, GTP hydrolase that promotes the GTP-dependent binding of aminoacyl-tRNA to the A-site of ribosomes during protein biosynthesis. The protein is Elongation factor Tu, chloroplastic (tufA) of Nephroselmis olivacea (Green alga).